A 199-amino-acid chain; its full sequence is Thymidylate kinase (199 aa).

Residue 7–14 coordinates ATP; sequence GIDGSGKS.

It belongs to the thymidylate kinase family.

The catalysed reaction is dTMP + ATP = dTDP + ADP. Its function is as follows. Phosphorylation of dTMP to form dTDP in both de novo and salvage pathways of dTTP synthesis. This chain is Thymidylate kinase, found in Neorickettsia sennetsu (strain ATCC VR-367 / Miyayama) (Ehrlichia sennetsu).